Here is a 254-residue protein sequence, read N- to C-terminus: Thiazole synthase (254 aa).

The active-site Schiff-base intermediate with DXP is K95. Residues G156, A182–G183, and N204–T205 contribute to the 1-deoxy-D-xylulose 5-phosphate site.

Belongs to the ThiG family. Homotetramer. Forms heterodimers with either ThiH or ThiS.

The protein resides in the cytoplasm. It catalyses the reaction [ThiS sulfur-carrier protein]-C-terminal-Gly-aminoethanethioate + 2-iminoacetate + 1-deoxy-D-xylulose 5-phosphate = [ThiS sulfur-carrier protein]-C-terminal Gly-Gly + 2-[(2R,5Z)-2-carboxy-4-methylthiazol-5(2H)-ylidene]ethyl phosphate + 2 H2O + H(+). The protein operates within cofactor biosynthesis; thiamine diphosphate biosynthesis. In terms of biological role, catalyzes the rearrangement of 1-deoxy-D-xylulose 5-phosphate (DXP) to produce the thiazole phosphate moiety of thiamine. Sulfur is provided by the thiocarboxylate moiety of the carrier protein ThiS. In vitro, sulfur can be provided by H(2)S. This is Thiazole synthase from Shewanella putrefaciens (strain CN-32 / ATCC BAA-453).